Here is a 184-residue protein sequence, read N- to C-terminus: Protein GrpE (184 aa).

A compositionally biased stretch (basic and acidic residues) spans 1-17 (MQHEDKTPEQQENKTPE). The interval 1 to 39 (MQHEDKTPEQQENKTPETELQQENAPATPQEAGAAGSID) is disordered. The segment covering 18–27 (TELQQENAPA) has biased composition (polar residues).

The protein belongs to the GrpE family. Homodimer.

Its subcellular location is the cytoplasm. In terms of biological role, participates actively in the response to hyperosmotic and heat shock by preventing the aggregation of stress-denatured proteins, in association with DnaK and GrpE. It is the nucleotide exchange factor for DnaK and may function as a thermosensor. Unfolded proteins bind initially to DnaJ; upon interaction with the DnaJ-bound protein, DnaK hydrolyzes its bound ATP, resulting in the formation of a stable complex. GrpE releases ADP from DnaK; ATP binding to DnaK triggers the release of the substrate protein, thus completing the reaction cycle. Several rounds of ATP-dependent interactions between DnaJ, DnaK and GrpE are required for fully efficient folding. In Methylobacillus flagellatus (strain ATCC 51484 / DSM 6875 / VKM B-1610 / KT), this protein is Protein GrpE.